The sequence spans 267 residues: Alkaline ceramidase 3 (267 aa).

Residues 1–33 are Cytoplasmic-facing; sequence MAPAADREGYWGPTTSTLDWCEENYSVTWYIAE. Ca(2+) contacts are provided by Asp-19, Trp-20, Glu-22, Asn-24, and Glu-33. Residues 34–55 traverse the membrane as a helical segment; it reads FWNTVSNLIMIIPPMFGAVQSV. At 56-61 the chain is on the lumenal side; the sequence is RDGLEK. Residues 62–82 form a helical membrane-spanning segment; it reads RYIASYLALTVVGMGSWCFHM. Residue His-81 participates in Zn(2+) binding. Over 83 to 87 the chain is Cytoplasmic; that stretch reads TLKYE. Residues 88 to 108 traverse the membrane as a helical segment; that stretch reads MQLLDELPMIYSCCIFVYCMF. The Lumenal portion of the chain corresponds to 109-118; sequence ECFKIKNSVN. The chain crosses the membrane as a helical span at residues 119–139; sequence YHLLFTLVLFSLIVTTVYLKV. The Cytoplasmic portion of the chain corresponds to 140-141; the sequence is KE. A helical membrane pass occupies residues 142 to 162; that stretch reads PIFHQVMYGMLVFTLVLRSIY. The Lumenal segment spans residues 163-173; the sequence is IVTWVYPWLRG. Residues 174-194 form a helical membrane-spanning segment; sequence LGYTSLGIFLLGFLFWNIDNI. The Cytoplasmic segment spans residues 195–215; that stretch reads FCESLRNFRKKVPPIIGITTQ. The chain crosses the membrane as a helical span at residues 216–236; sequence FHAWWHILTGLGSYLHILFSL. Residues His-217 and His-221 each contribute to the Zn(2+) site. Topologically, residues 237-267 are lumenal; sequence YTRTLYLRYRPKVKFLFGIWPVILFEPLRKH.

This sequence belongs to the alkaline ceramidase family. It depends on Zn(2+) as a cofactor. As to expression, ubiquitously expressed. Highly expressed in placenta. Expressed in erythrocytes.

It localises to the endoplasmic reticulum membrane. Its subcellular location is the golgi apparatus membrane. The enzyme catalyses an N-acyl-(4R)-4-hydroxysphinganine + H2O = (4R)-hydroxysphinganine + a fatty acid. It carries out the reaction N-(5Z,8Z,11Z,14Z-eicosatetraenoyl)-sphing-4-enine + H2O = sphing-4-enine + (5Z,8Z,11Z,14Z)-eicosatetraenoate. The catalysed reaction is N-(5Z,8Z,11Z,14Z-eicosatetraenoyl)-sphinganine + H2O = sphinganine + (5Z,8Z,11Z,14Z)-eicosatetraenoate. It catalyses the reaction N-(5Z,8Z,11Z,14Z-eicosatetraenoyl)-(4R)-hydroxysphinganine + H2O = (4R)-hydroxysphinganine + (5Z,8Z,11Z,14Z)-eicosatetraenoate. The enzyme catalyses N-(11Z-eicosenoyl)-sphing-4-enine + H2O = (11Z)-eicosenoate + sphing-4-enine. It carries out the reaction N-(11Z-eicosenoyl)-sphinganine + H2O = (11Z)-eicosenoate + sphinganine. The catalysed reaction is N-(11Z-eicosenoyl)-(4R)-hydroxysphinganine + H2O = (11Z)-eicosenoate + (4R)-hydroxysphinganine. It catalyses the reaction N-(9Z-octadecenoyl)-sphing-4-enine + H2O = sphing-4-enine + (9Z)-octadecenoate. The enzyme catalyses N-(9Z-octadecenoyl)-sphinganine + H2O = sphinganine + (9Z)-octadecenoate. It carries out the reaction N-(9Z-octadecenoyl)-(4R)-hydroxysphinganine + H2O = (4R)-hydroxysphinganine + (9Z)-octadecenoate. The catalysed reaction is an N-acylsphing-4-enine + H2O = sphing-4-enine + a fatty acid. It catalyses the reaction an N-acylsphinganine + H2O = sphinganine + a fatty acid. It participates in lipid metabolism; sphingolipid metabolism. Activated by 5 mM Ca(2+) and inhibited by 5 mM Zn(2+). Functionally, endoplasmic reticulum and Golgi ceramidase that catalyzes the hydrolysis of unsaturated long-chain C18:1-, C20:1- and C20:4-ceramides, dihydroceramides and phytoceramides into sphingoid bases like sphingosine and free fatty acids at alkaline pH. Ceramides, sphingosine, and its phosphorylated form sphingosine-1-phosphate are bioactive lipids that mediate cellular signaling pathways regulating several biological processes including cell proliferation, apoptosis and differentiation. Controls the generation of sphingosine in erythrocytes, and thereby sphingosine-1-phosphate in plasma. Through the regulation of ceramides and sphingosine-1-phosphate homeostasis in the brain may play a role in neurons survival and function. By regulating the levels of pro-inflammatory ceramides in immune cells and tissues, may modulate the inflammatory response. The protein is Alkaline ceramidase 3 (ACER3) of Homo sapiens (Human).